Here is a 544-residue protein sequence, read N- to C-terminus: Major royal jelly protein 3 (544 aa).

The signal sequence occupies residues 1–20 (MTKWLLLVVCLGIACQDVTS). The N-linked (GlcNAc...) asparagine glycan is linked to asparagine 183. Positions 421-544 (RYHNQNAGNQ…NQVHHSSKLH (124 aa)) are disordered. A run of 20 repeats spans residues 424 to 428 (NQNAG), 429 to 433 (NQNAD), 434 to 438 (NQNAD), 439 to 443 (NQNAN), 444 to 448 (NQNAD), 449 to 453 (NQNAN), 454 to 458 (KQNGN), 459 to 463 (RQNDN), 464 to 468 (RQNDN), 469 to 473 (KQNGN), 474 to 478 (RQNDN), 479 to 483 (KQNGN), 484 to 488 (RQNDN), 489 to 493 (KQNGN), 494 to 498 (RQNGN), 499 to 503 (KQNDN), 504 to 508 (KQNGN), 509 to 513 (RQNDN), 514 to 518 (KRNGN), and 519 to 523 (RQNDN). 3 stretches are compositionally biased toward low complexity: residues 424 to 460 (NQNAGNQNADNQNADNQNANNQNADNQNANKQNGNRQ), 468 to 510 (NKQN…GNRQ), and 518 to 530 (NRQNDNQNNQNDN). The tract at residues 424–523 (NQNAGNQNAD…KRNGNRQNDN (100 aa)) is 23 X 5 AA tandem repeats of [NKR]-[RQ]-N-[AGD]-[DNG]. Residues 524–525 (QN) form a 21; half-length repeat. Repeat copies occupy residues 526–530 (NQNDN) and 531–535 (NRNDN).

The protein belongs to the major royal jelly protein family. Homoligomer; in the absence of RNA, assembles into a higher-order oligomeric form, composed of around 20 monomer units. Found in and secreted from the hypopharyngeal glands of the worker honey bee (at protein level); expression peaks at 12 days post eclosion. Expressed in the brains of worker bees. Expressed in the brains of adult worker bees peaking at 12 days post eclosion (at protein level). Expressed in the spermatheca of adult queen bees (at protein level); Expression levels are higher in mated queens than in virgin queens. Expressed in queen bee ovaries and male drone testes. Expression in the head of forager worker bees is lower than in the heads of nurse worker bees.

Its subcellular location is the secreted. Functionally, abundant protein component of royal jelly, a substance produced in the hypopharyngeal gland containing proteins, free amino acids, fatty acids, sugars and other nutrients, which is fed to developing larvae by worker nurse bees. Major royal jelly proteins (MRJPs) are high in essential amino acids and probably have a nutritional function in larval food. All larvae are fed some royal jelly (also known as worker jelly) early in their development but it forms the principal source of nutrition for larvae destined to become queen bees. Secreted RNA-binding protein required to concentrate, stabilize and enhance environmental RNA bioavailability in the honey bee royal jelly. Acts as a RNA-aggregating protein: binds 18 nucleotides and longer single- and double-stranded RNA (ssRNA and dsRNA, respectively) in a non-specific manner. RNA-binding drives super-order assembly of oligomers into extracellular ribonucleoprotein granules that concentrate, protect and enhance RNA uptake granules, facilitating RNA transfer among bees. Produced in the spermatheca of adult queen bees, along with other major royal jelly proteins, where it may act as a nutrient supply for sperm stored by mated queens, or be involved in energy metabolism. In Apis mellifera (Honeybee), this protein is Major royal jelly protein 3.